A 100-amino-acid chain; its full sequence is uncharacterized protein (100 aa).

Basic and acidic residues predominate over residues 68 to 91 (EQYASGAGEKRKEQSSGNSRRKDP). The interval 68 to 100 (EQYASGAGEKRKEQSSGNSRRKDPSLYNWSDVK) is disordered.

This sequence belongs to the chlamydial CPn_0121/CT_031/TC_0300 family.

This is an uncharacterized protein from Chlamydia muridarum (strain MoPn / Nigg).